The sequence spans 222 residues: Putative metal transport protein MJ1569 (222 aa).

6 helical membrane passes run 3–23 (IPDGYLGPITCAFFYLIMIPI), 39–59 (LPLLGVLTAFSFLVMMFNLPV), 81–101 (WVATIAISIVLIIQAIFFGDG), 102–122 (GITCIGANCFNMGVVLPFVGY), 135–155 (VIASGIGAYVGIVAAAIVAGF), and 180–200 (AFAHLITAGPAAAVVTAIVVW).

It belongs to the CbiM family.

Its subcellular location is the cell membrane. Its function is as follows. May be involved in metal transport. The protein is Putative metal transport protein MJ1569 of Methanocaldococcus jannaschii (strain ATCC 43067 / DSM 2661 / JAL-1 / JCM 10045 / NBRC 100440) (Methanococcus jannaschii).